Here is a 31-residue protein sequence, read N- to C-terminus: M-poneritoxin-Nc3b (31 aa).

The protein belongs to the ponericin-G family. In terms of tissue distribution, expressed by the venom gland.

It localises to the secreted. It is found in the target cell membrane. Functionally, membrane-perturbating peptide with a few moderate activities. It is insecticidal, since it induces reversible paralysis in insects (L.cuprina) after 1 hour, but fails to kill them. It is also antiparasitic, since it moderately inhibits the larval development of the major pathogenic nematode of ruminants (H.contortus, IC(50)=23.2 uM) and reduces the motility of adult males of the other nematode B.malayi. It does not show antibacterial activity (MIC&gt;40 uM). It is not cytotoxic to HEK293 cells and does not induce hemolysis in human erythrocytes. It does not cause an increase in intracellular calcium concentration on neuronal and epithelial cell lines. In Neoponera commutata (Large hunting ant), this protein is M-poneritoxin-Nc3b.